Reading from the N-terminus, the 652-residue chain is Sodium-dependent nutrient amino acid transporter 1 (652 aa).

The tract at residues 1–54 (MELKGVHQQNGTSNGTGAVGAEGESAPPTAPATAEAAASLETTTEKVDAEQQKP) is disordered. Residues 1 to 58 (MELKGVHQQNGTSNGTGAVGAEGESAPPTAPATAEAAASLETTTEKVDAEQQKPERTN) lie on the Cytoplasmic side of the membrane. Residues 7 to 16 (HQQNGTSNGT) are compositionally biased toward polar residues. The span at 21 to 42 (AEGESAPPTAPATAEAAASLET) shows a compositional bias: low complexity. A compositionally biased stretch (basic and acidic residues) spans 43–54 (TTEKVDAEQQKP). A run of 4 helical transmembrane segments spans residues 59 to 79 (WGNGLEFLMSCISVSVGLGNV), 92 to 112 (GAFLIPYIIVLFLIGKPMYYL), 130 to 150 (VVPGFVGVGYGQAFATICIIT), and 155 to 175 (LLALTLYYLFVSFQSVLPWSY). Residues asparagine 201 and asparagine 204 are each glycosylated (N-linked (GlcNAc...) asparagine). 9 consecutive transmembrane segments (helical) span residues 240 to 260 (PDWKLTLALFVSWVVIFLVIM), 269 to 289 (AAYFLALFPYVVLFILLVRAV), 318 to 338 (AVVQCFFSLAVGSGPIIMFAS), 352 to 372 (IVTTLDTLTSLLGGITIFAIL), 412 to 432 (LFSVLFFFMLFVLGIGSIVAL), 458 to 478 (ICGFLMGLVYVTPGGQWILTL), 485 to 505 (TYVVFILAIFELAGIVWIYGM), 527 to 547 (CWSFFTPVMMIVIFIYSMVTI), and 564 to 584 (AGWLLFGIGAAQFPLWWMWYI).

This sequence belongs to the sodium:neurotransmitter symporter (SNF) (TC 2.A.22) family.

The protein resides in the membrane. Its function is as follows. Unusual broad substrate spectrum amino acid:sodium cotransporter that promotes absorption of the D isomers of essential amino acids. Neutral amino acids are the preferred substrates, especially methionine and phenylalanine. This is Sodium-dependent nutrient amino acid transporter 1 from Drosophila persimilis (Fruit fly).